Here is a 381-residue protein sequence, read N- to C-terminus: GDP-mannose transporter (381 aa).

Basic and acidic residues predominate over residues 1–12; sequence MSDDKKSDDYRV. The disordered stretch occupies residues 1–28; sequence MSDDKKSDDYRVDMPSSRTSRAPSPIMR. Over 1–36 the chain is Cytoplasmic; the sequence is MSDDKKSDDYRVDMPSSRTSRAPSPIMRPALKSAPS. The chain crosses the membrane as a helical span at residues 37–57; the sequence is LTENPMAAVLAYCASSILMTV. The Lumenal segment spans residues 58 to 67; that stretch reads TNKYVLSGVD. A helical membrane pass occupies residues 68-88; that stretch reads FNLNFFLLCVQSVVCVTAISI. At 89–107 the chain is on the cytoplasmic side; that stretch reads CKAAGLITYRDFNTDEAKK. Residues 108 to 126 form a helical membrane-spanning segment; that stretch reads WFPISLLLIGMIYTGTWAL. The Lumenal segment spans residues 127–130; it reads KYLS. Residues 131–153 traverse the membrane as a helical segment; that stretch reads IPVYTIFKNLTIILIAYGEVLWF. Residues 154 to 161 lie on the Cytoplasmic side of the membrane; sequence GGSVTPMT. The chain crosses the membrane as a helical span at residues 162-184; the sequence is LFSFGLMVLSSIIAAWADIQHAL. The Lumenal portion of the chain corresponds to 185–199; sequence NSFGQQSEAANEALS. The helical transmembrane segment at 200–220 threads the bilayer; it reads TMHAGYLWMAFNCVCSATYLL. The Cytoplasmic segment spans residues 221–242; it reads SMRKRIKLTNFKDYDTMYYNNL. A helical membrane pass occupies residues 243–263; the sequence is LTIPILLVASILVEDWSSANI. The Lumenal segment spans residues 264-274; that stretch reads QKNFPPEQRNT. Residues 275 to 295 form a helical membrane-spanning segment; that stretch reads VIMVMVISGMSTVFISYTSAW. At 296 to 303 the chain is on the cytoplasmic side; it reads AVRVTSST. A helical membrane pass occupies residues 304 to 324; it reads TYSMVGALNKLPIAISGLVFF. Topologically, residues 325-327 are lumenal; sequence DAP. A helical transmembrane segment spans residues 328 to 348; that stretch reads VTFGSVSAIFVGFVSGIVYAV. Topologically, residues 349–381 are cytoplasmic; that stretch reads AKVRQNSKPKTVLPTTNIPLSASSRSMQDSLKA.

Belongs to the TPT transporter family. SLC35D subfamily. As to quaternary structure, homooligomer.

The protein localises to the golgi apparatus membrane. Its subcellular location is the cytoplasmic vesicle membrane. It localises to the endoplasmic reticulum membrane. Involved in the import of GDP-mannose from the cytoplasm into the Golgi lumen. This is GDP-mannose transporter (VRG4) from Phaeosphaeria nodorum (strain SN15 / ATCC MYA-4574 / FGSC 10173) (Glume blotch fungus).